A 462-amino-acid chain; its full sequence is RuvB-like 2 (462 aa).

76–83 provides a ligand contact to ATP; sequence GQPGTGKT.

The protein belongs to the RuvB family. As to quaternary structure, forms homohexameric rings. Can form a dodecamer with ruvbl2 made of two stacked hexameric rings. Is a component of the RNA polymerase II holoenzyme complex. Component of the chromatin-remodeling Ino80 complex. Component of some MLL1/MLL complex.

It localises to the nucleus. Its subcellular location is the dynein axonemal particle. The catalysed reaction is ATP + H2O = ADP + phosphate + H(+). Functionally, has single-stranded DNA-stimulated ATPase and ATP-dependent DNA helicase (5' to 3') activity suggesting a role in nuclear processes such as recombination and transcription. Proposed core component of the chromatin remodeling INO80 complex which exhibits DNA- and nucleosome-activated ATPase activity and catalyzes ATP-dependent nucleosome sliding. Involved in the endoplasmic reticulum (ER)-associated degradation (ERAD) pathway where it negatively regulates expression of ER stress response genes. The sequence is that of RuvB-like 2 (ruvbl2) from Xenopus laevis (African clawed frog).